The sequence spans 272 residues: 3-keto-5-aminohexanoate cleavage enzyme (272 aa).

Residue glutamate 15 participates in (5S)-5-amino-3-oxohexanoate binding. Zn(2+) contacts are provided by histidine 47 and histidine 49. Positions 83, 86, and 107 each coordinate (5S)-5-amino-3-oxohexanoate. Glutamate 226 lines the Zn(2+) pocket.

The protein belongs to the BKACE family. Kce subfamily. As to quaternary structure, homotetramer. Requires Zn(2+) as cofactor.

The enzyme catalyses (5S)-5-amino-3-oxohexanoate + acetyl-CoA = (3S)-3-aminobutanoyl-CoA + acetoacetate. The protein operates within amino-acid degradation; L-lysine degradation via acetate pathway. Its activity is regulated as follows. 3-fold increase in activity by addition of 10 mM 2-mercaptoethanol. Addition of CoCl(2) and to a lesser extent MnCl(2) increases the activity but not MgCl(2). Inhibited by phosphate buffer but not by 5,5'-dithio-2-nitrobenzoic acid. Functionally, involved in the anaerobic fermentation of lysine. Catalyzes the reversible reaction between 3-keto-5-aminohexanoate (KAH) and acetyl-CoA to form 3-aminobutyryl-CoA and acetoacetate. The reaction involves the deprotonation of KAH, the nucleophilic addition onto acetyl-CoA and the intramolecular transfer of the CoA moiety. It can also use beta-alanyl-CoA as substrate. The sequence is that of 3-keto-5-aminohexanoate cleavage enzyme from Fusobacterium nucleatum subsp. nucleatum (strain ATCC 25586 / DSM 15643 / BCRC 10681 / CIP 101130 / JCM 8532 / KCTC 2640 / LMG 13131 / VPI 4355).